Reading from the N-terminus, the 1549-residue chain is Trichohyalin (1549 aa).

The tract at residues 1 to 91 is S-100-like; that stretch reads MSPLLRSIFN…AAACYYALGQ (91 aa). 2 EF-hand domains span residues 23-48 and 49-84; these read CDGT…LRKP and HDPE…VAAA. 6 residues coordinate Ca(2+): T27, D32, D62, D64, D66, and E73. Disordered regions lie at residues 97–125, 157–180, 262–359, and 404–448; these read EKEA…PQDR, LQRR…GREL, LRRK…KQEQ, and QREK…RQER. 3 stretches are compositionally biased toward basic and acidic residues: residues 171-180, 262-278, and 317-335; these read LQQRPKGREL, LRRK…RQEQ, and HRQE…ERQQ. Residues 336–348 are compositionally biased toward low complexity; the sequence is EQQISEEVQSLQE. A compositionally biased stretch (basic and acidic residues) spans 349-359; sequence DQGRQRLKQEQ. A run of 14 repeats spans residues 413 to 448, 449 to 476, 477 to 504, 505 to 532, 533 to 560, 561 to 588, 589 to 616, 617 to 644, 645 to 678, 679 to 706, 707 to 742, 743 to 771, 772 to 796, and 797 to 832. Positions 413–832 are 14 X 28 AA approximate tandem repeats; the sequence is ERQYREVELQ…ECEKRRRQEL (420 aa). 3 disordered regions span residues 782-803, 839-942, and 980-1000; these read REEE…YREE, EELQ…RKFR, and QLRQ…ERDR. 3 stretches are compositionally biased toward basic and acidic residues: residues 850–884, 895–918, and 925–942; these read FRDD…DSWV, PLQD…KRDS, and LLER…RKFR. A run of 23 repeats spans residues 938-961, 962-985, 986-1021, 1022-1044, 1045-1067, 1068-1090, 1091-1121, 1122-1144, 1145-1167, 1168-1197, 1198-1227, 1228-1250, 1251-1273, 1274-1296, 1297-1319, 1320-1342, 1343-1368, 1369-1391, 1392-1416, 1417-1439, 1440-1461, 1462-1484, and 1485-1507. The interval 938-1507 is 23 X 23 AA approximate tandem repeats; the sequence is DRKFREEEQL…ERDVQQSRRQ (570 aa). Positions 1489-1523 are enriched in basic and acidic residues; it reads QQEEQKRRQERDVQQSRRQVWEEDKGRRQVLEAGK. Positions 1489–1549 are disordered; that stretch reads QQEEQKRRQE…IQEQRSQYRP (61 aa).

Belongs to the S100-fused protein family. As to quaternary structure, homodimer. Post-translationally, substrate of transglutaminase. Some 200 arginines are probably converted to citrullines by peptidylarginine deimidase. In terms of tissue distribution, found in the hard keratinizing tissues such as the inner root sheath (IRS) of hair follicles and medulla, and in the epithelia of the tongue, hoof and rumen.

In terms of biological role, intermediate filament-associated protein that associates in regular arrays with keratin intermediate filaments (KIF) of the inner root sheath cells of the hair follicle and the granular layer of the epidermis. It later becomes cross-linked to KIF by isodipeptide bonds. It may serve as scaffold protein, together with involucrin, in the organization of the cell envelope or even anchor the cell envelope to the KIF network. It may be involved in its own calcium-dependent postsynthetic processing during terminal differentiation. The chain is Trichohyalin (TCHH) from Ovis aries (Sheep).